The primary structure comprises 296 residues: Endonuclease 5 (296 aa).

A signal peptide spans 1-20 (MRLWIVSVLVLTHLVHGALC). The a divalent metal cation site is built by tryptophan 21 and histidine 26. 21 to 26 (WGKDGH) contributes to the substrate binding site. A disulfide bond links cysteine 30 and cysteine 62. Positions 66 and 81 each coordinate a divalent metal cation. Residues 66–72 (DEIKKLS), 81–84 (HYVN), and 91–96 (NYEYCR) each bind substrate. 3 cysteine pairs are disulfide-bonded: cysteine 90–cysteine 243, cysteine 98–cysteine 108, and cysteine 223–cysteine 230. Substrate is bound by residues asparagine 115 and tyrosine 133. The N-linked (GlcNAc...) asparagine glycan is linked to asparagine 115. N-linked (GlcNAc...) asparagine glycosylation is present at asparagine 134. 3 residues coordinate a divalent metal cation: histidine 144, aspartate 148, and histidine 154. The interval 144–193 (HYMGDVHQPLHTGFLGDLGGNTIIVNWYHNKSNLHHVWDNMIIDSALETY) is substrate binding. An N-linked (GlcNAc...) asparagine glycan is attached at asparagine 173. A divalent metal cation contacts are provided by histidine 178 and aspartate 182. Residue asparagine 195 is glycosylated (N-linked (GlcNAc...) asparagine). Positions 281 to 296 (ATLNRIFSAKPKLAGL) are cleaved as a propeptide — removed in mature form.

It belongs to the nuclease type I family. Monomer. The cofactor is Zn(2+).

It catalyses the reaction Endonucleolytic cleavage to 5'-phosphomononucleotide and 5'-phosphooligonucleotide end-products.. Hydrolyzes, with low efficiency, only single-stranded DNA and RNA without apparent specificity for bases. Endonuclease that recognizes and cleaves some mismatches with high efficiency, including heteroduplex double-stranded DNA; mostly efficient on T/G, A/G and G/G mismatches, less efficient for T/T and poorly efficient for C/C, A/A, T/C and A/C. This is Endonuclease 5 from Arabidopsis thaliana (Mouse-ear cress).